A 163-amino-acid polypeptide reads, in one-letter code: Cytosolic iron-sulfur assembly component 2B (163 aa).

Belongs to the MIP18 family.

The protein localises to the nucleus. The protein resides in the cytoplasm. It localises to the cytoskeleton. It is found in the spindle. In terms of biological role, component of the cytosolic iron-sulfur (Fe/S) protein assembly machinery. Required for the maturation of extramitochondrial Fe/S proteins. May play a role in chromosome segregation through establishment of sister chromatid cohesion. This chain is Cytosolic iron-sulfur assembly component 2B, found in Dictyostelium discoideum (Social amoeba).